The sequence spans 253 residues: Triosephosphate isomerase (253 aa).

Residue 15–17 (NWK) coordinates substrate. The active-site Electrophile is His101. Glu171 functions as the Proton acceptor in the catalytic mechanism. Substrate contacts are provided by residues Gly177, Ser216, and 237 to 238 (GG).

The protein belongs to the triosephosphate isomerase family. As to quaternary structure, homodimer.

It is found in the cytoplasm. It catalyses the reaction D-glyceraldehyde 3-phosphate = dihydroxyacetone phosphate. The protein operates within carbohydrate biosynthesis; gluconeogenesis. It participates in carbohydrate degradation; glycolysis; D-glyceraldehyde 3-phosphate from glycerone phosphate: step 1/1. Its function is as follows. Involved in the gluconeogenesis. Catalyzes stereospecifically the conversion of dihydroxyacetone phosphate (DHAP) to D-glyceraldehyde-3-phosphate (G3P). This chain is Triosephosphate isomerase, found in Caulobacter vibrioides (strain ATCC 19089 / CIP 103742 / CB 15) (Caulobacter crescentus).